We begin with the raw amino-acid sequence, 1761 residues long: Laminin subunit beta-4 (1761 aa).

An N-terminal signal peptide occupies residues 1–19 (MQFQLTLFLHLGWLSYSKA). The 241-residue stretch at 24–264 (NRGACHPTTG…ALYEMIVRGS (241 aa)) folds into the Laminin N-terminal domain. Asn169, Asn229, and Asn246 each carry an N-linked (GlcNAc...) asparagine glycan. Disulfide bonds link Cys265–Cys274, Cys267–Cys295, Cys297–Cys306, Cys309–Cys329, Cys332–Cys341, Cys334–Cys359, Cys362–Cys371, Cys374–Cys392, Cys395–Cys408, Cys397–Cys423, Cys425–Cys434, Cys437–Cys452, Cys455–Cys468, Cys457–Cys475, Cys477–Cys486, Cys489–Cys503, Cys506–Cys518, Cys508–Cys525, and Cys527–Cys536. 4 Laminin EGF-like domains span residues 265–331 (CFCN…ACRS), 332–394 (CSCN…ACIP), 395–454 (CECD…GCQP), and 455–505 (CDCN…GCSP). The Laminin EGF-like 5; truncated domain occupies 506–552 (CDCDIGGAYSNVCSPKNGQCECRPHVTGRSCSEPAPGYFFAPLNFYL). The 219-residue stretch at 545-763 (FAPLNFYLYE…LIISMSAKLH (219 aa)) folds into the Laminin IV type B domain. Disulfide bonds link Cys769–Cys781, Cys771–Cys788, Cys790–Cys799, Cys802–Cys814, Cys817–Cys829, Cys819–Cys836, Cys838–Cys847, Cys850–Cys860, Cys863–Cys872, Cys865–Cys879, Cys882–Cys891, Cys894–Cys908, Cys913–Cys938, Cys940–Cys949, Cys952–Cys967, Cys970–Cys984, Cys972–Cys991, Cys994–Cys1003, Cys1006–Cys1019, Cys1022–Cys1043, Cys1024–Cys1050, Cys1052–Cys1061, Cys1064–Cys1077, Cys1080–Cys1092, Cys1082–Cys1099, Cys1101–Cys1110, Cys1113–Cys1125, Cys1128–Cys1140, Cys1130–Cys1147, Cys1149–Cys1158, and Cys1161–Cys1172. Laminin EGF-like domains lie at 769–816 (CKCH…GCHP), 817–862 (CHCH…SCHP), 863–910 (CPCN…PCRP), 911–969 (CLCP…PCQP), 970–1021 (CACN…TCRR), 1022–1079 (CSCH…GCQS), 1080–1127 (CDCD…RCIP), and 1128–1174 (CDCN…TCLQ). N-linked (GlcNAc...) asparagine glycosylation is present at Asn1016. Asn1055 carries N-linked (GlcNAc...) asparagine glycosylation. The domain II stretch occupies residues 1175 to 1375 (CHLCFDQWDH…PDIQILNEKV (201 aa)). N-linked (GlcNAc...) asparagine glycans are attached at residues Asn1223, Asn1301, Asn1326, Asn1333, and Asn1354. Residues 1243–1301 (KVKDYHDSVRRQIMQLNEQLKAVYEFQDLKDTIERAKNEADLLLEDLQEEIDLQSSVLN) adopt a coiled-coil conformation. The domain alpha stretch occupies residues 1376–1408 (CGDPGNVPCVPLPCGGALCTGRKGHRKCRGPGC). The segment at 1409 to 1761 (HGSLTLSTNA…QEKKYARCYS (353 aa)) is domain I. Residues 1416 to 1480 (TNALQKAQEA…SDSEEENINL (65 aa)) adopt a coiled-coil conformation. 6 N-linked (GlcNAc...) asparagine glycosylation sites follow: Asn1469, Asn1517, Asn1587, Asn1596, Asn1609, and Asn1725. A coiled-coil region spans residues 1525–1759 (IQKHMQLCED…VEQEKKYARC (235 aa)).

In terms of assembly, laminin is a complex glycoprotein, consisting of three different polypeptide chains (alpha, beta, gamma), which are bound to each other by disulfide bonds into a cross-shaped molecule comprising one long and three short arms with globules at each end.

It is found in the secreted. It localises to the extracellular space. The protein localises to the extracellular matrix. Its subcellular location is the basement membrane. In terms of biological role, binding to cells via a high affinity receptor, laminin is thought to mediate the attachment, migration and organization of cells into tissues during embryonic development by interacting with other extracellular matrix components. This is Laminin subunit beta-4 (LAMB4) from Homo sapiens (Human).